The primary structure comprises 302 residues: Glutaminase (302 aa).

Substrate-binding residues include serine 61, asparagine 111, glutamate 155, asparagine 162, tyrosine 186, tyrosine 238, and valine 256.

Belongs to the glutaminase family. As to quaternary structure, homotetramer.

The catalysed reaction is L-glutamine + H2O = L-glutamate + NH4(+). The sequence is that of Glutaminase from Pseudomonas fluorescens (strain Pf0-1).